A 333-amino-acid chain; its full sequence is Adenosine deaminase (333 aa).

H12 and H14 together coordinate Zn(2+). Substrate contacts are provided by H14, D16, and G170. A Zn(2+)-binding site is contributed by H197. E200 serves as the catalytic Proton donor. A Zn(2+)-binding site is contributed by D278. A substrate-binding site is contributed by D279.

Belongs to the metallo-dependent hydrolases superfamily. Adenosine and AMP deaminases family. Adenosine deaminase subfamily. Zn(2+) is required as a cofactor.

The enzyme catalyses adenosine + H2O + H(+) = inosine + NH4(+). It carries out the reaction 2'-deoxyadenosine + H2O + H(+) = 2'-deoxyinosine + NH4(+). Catalyzes the hydrolytic deamination of adenosine and 2-deoxyadenosine. The polypeptide is Adenosine deaminase (Shigella dysenteriae serotype 1 (strain Sd197)).